The primary structure comprises 291 residues: MEMO1 family protein PYRAB05390 (291 aa).

This sequence belongs to the MEMO1 family.

The protein is MEMO1 family protein PYRAB05390 of Pyrococcus abyssi (strain GE5 / Orsay).